A 215-amino-acid polypeptide reads, in one-letter code: Histone-like protein 18C (215 aa).

Residues 140–215 (CTPRKENKCS…PKSSKPKCSM (76 aa)) are disordered. 2 stretches are compositionally biased toward basic residues: residues 149–190 (SKPR…RPRK) and 197–215 (AKAK…KCSM).

Functionally, not known. Encoded in the intron of cAMP-dependent protein kinase regulatory chain type I. The chain is Histone-like protein 18C (Mst77F) from Drosophila melanogaster (Fruit fly).